The primary structure comprises 352 residues: RNA demethylase ALKBH5 (352 aa).

Over residues 18 to 34 (RDKVFEYSNGEKRKYRE) the composition is skewed to basic and acidic residues. Residues 18–47 (RDKVFEYSNGEKRKYRESDDDESEYEERRD) are disordered. Residue Tyr107 is part of the active site. 2-oxoglutarate-binding residues include Asn161, Tyr163, and His172. Positions 172, 174, and 234 each coordinate Fe cation. A disulfide bond links Cys198 and Cys235. 2 residues coordinate 2-oxoglutarate: His234 and Arg245. Positions 260–352 (LDSNSLSPSI…PTRRVKMRRH (93 aa)) are disordered. Over residues 272-285 (PKRRHILKAKRSHR) the composition is skewed to basic residues. Composition is skewed to basic and acidic residues over residues 286-306 (KADP…ELQR) and 315-343 (RHDD…DHAP).

Belongs to the alkB family. In terms of assembly, monomer. Fe(2+) is required as a cofactor.

It is found in the nucleus speckle. The catalysed reaction is an N(6)-methyladenosine in mRNA + 2-oxoglutarate + O2 = an adenosine in mRNA + formaldehyde + succinate + CO2. Dioxygenase that specifically demethylates N(6)-methyladenosine (m6A) RNA, the most prevalent internal modification of messenger RNA (mRNA) in higher eukaryotes. Demethylates RNA by oxidative demethylation, which requires molecular oxygen, alpha-ketoglutarate and iron. Demethylation of m6A mRNA affects mRNA processing, translation and export. In Danio rerio (Zebrafish), this protein is RNA demethylase ALKBH5 (alkbh5).